Here is a 170-residue protein sequence, read N- to C-terminus: MSTAGDGERGTVGQEDSAAARPFRFSPEPTLEDIRRLHAEFAAERDWEQFHQPRNLLLALVGEVGELAELFQWKSDTEPGPQAWPPKERAALQEELSDVLIYLVALAARCHVDLPQAVISKMDTNRQRYPVHLSRGSACKYTDLPRGTISENQAVGAGDPASELRDQAST.

Residues 1–25 form a disordered region; that stretch reads MSTAGDGERGTVGQEDSAAARPFRF. N-acetylserine is present on Ser2. At Ser2 the chain carries Phosphoserine. Substrate is bound by residues His38 and 47–51; that span reads WEQFH. Mg(2+)-binding residues include Glu63 and Glu66. Trp73 provides a ligand contact to substrate. 2 residues coordinate Mg(2+): Glu95 and Asp98. Tyr102 lines the substrate pocket. The segment at 150 to 170 is disordered; the sequence is SENQAVGAGDPASELRDQAST.

Homotetramer. It depends on Mg(2+) as a cofactor. In terms of tissue distribution, ubiquitous. Highly expressed in heart, liver, skeletal muscle, cerebellum, brain, and salivary gland.

The protein localises to the cytoplasm. The protein resides in the cytosol. The catalysed reaction is dCTP + H2O = dCMP + diphosphate + H(+). With respect to regulation, inhibited by divalent calcium or cadmium ions. Hydrolyzes deoxynucleoside triphosphates (dNTPs) to the corresponding nucleoside monophosphates. Has a strong preference for dCTP and its analogs including 5-iodo-dCTP and 5-methyl-dCTP for which it may even have a higher efficiency. May protect DNA or RNA against the incorporation of these genotoxic nucleotide analogs through their catabolism. This chain is dCTP pyrophosphatase 1, found in Mus musculus (Mouse).